We begin with the raw amino-acid sequence, 174 residues long: Crossover junction endodeoxyribonuclease RuvC (174 aa).

Active-site residues include aspartate 8, glutamate 67, and aspartate 139. Mg(2+)-binding residues include aspartate 8, glutamate 67, and aspartate 139.

This sequence belongs to the RuvC family. As to quaternary structure, homodimer which binds Holliday junction (HJ) DNA. The HJ becomes 2-fold symmetrical on binding to RuvC with unstacked arms; it has a different conformation from HJ DNA in complex with RuvA. In the full resolvosome a probable DNA-RuvA(4)-RuvB(12)-RuvC(2) complex forms which resolves the HJ. Mg(2+) is required as a cofactor.

The protein resides in the cytoplasm. The catalysed reaction is Endonucleolytic cleavage at a junction such as a reciprocal single-stranded crossover between two homologous DNA duplexes (Holliday junction).. Functionally, the RuvA-RuvB-RuvC complex processes Holliday junction (HJ) DNA during genetic recombination and DNA repair. Endonuclease that resolves HJ intermediates. Cleaves cruciform DNA by making single-stranded nicks across the HJ at symmetrical positions within the homologous arms, yielding a 5'-phosphate and a 3'-hydroxyl group; requires a central core of homology in the junction. The consensus cleavage sequence is 5'-(A/T)TT(C/G)-3'. Cleavage occurs on the 3'-side of the TT dinucleotide at the point of strand exchange. HJ branch migration catalyzed by RuvA-RuvB allows RuvC to scan DNA until it finds its consensus sequence, where it cleaves and resolves the cruciform DNA. In Pseudomonas fluorescens (strain SBW25), this protein is Crossover junction endodeoxyribonuclease RuvC.